Reading from the N-terminus, the 572-residue chain is Vacuolar protein sorting-associated protein vps901 (572 aa).

Basic and acidic residues-rich tracts occupy residues 1–31 and 39–53; these read MDYP…EKPL and DEQR…KNHD. The disordered stretch occupies residues 1 to 108; that stretch reads MDYPSFHEDP…HENNPGQQEI (108 aa). Residues 69 to 80 show a composition bias toward polar residues; the sequence is QYEQTDSSSDQE. Residues 82-98 are compositionally biased toward basic and acidic residues; the sequence is MNEKQSLDKENRNDNIP. The VPS9 domain maps to 219-357; that stretch reads VEEDRVLSEK…IETLDCSSLT (139 aa). A disordered region spans residues 430–502; the sequence is QIDTPESKEY…IVHEEQPVDD (73 aa). Residues 445–457 are compositionally biased toward polar residues; the sequence is PRGSSHSGSFTTD. The 43-residue stretch at 529–571 folds into the CUE domain; sequence REKAEAITALRAMFPAFDSEVIEVVLNAQQGRLSSSIDSLLEM.

In terms of biological role, required for vacuolar protein sorting; may be required for the consumption of transport vesicles containing vacuolar protein precursors. Required for vacuolar fusion. The chain is Vacuolar protein sorting-associated protein vps901 (vps901) from Schizosaccharomyces pombe (strain 972 / ATCC 24843) (Fission yeast).